The chain runs to 170 residues: Phosphopantetheine adenylyltransferase (170 aa).

T10 is a binding site for substrate. ATP is bound by residues T10–F11 and H18. K42, L75, and R89 together coordinate substrate. ATP is bound by residues G90–R92, E100, and Y125–S131.

It belongs to the bacterial CoaD family. Homohexamer. Mg(2+) serves as cofactor.

The protein resides in the cytoplasm. The enzyme catalyses (R)-4'-phosphopantetheine + ATP + H(+) = 3'-dephospho-CoA + diphosphate. The protein operates within cofactor biosynthesis; coenzyme A biosynthesis; CoA from (R)-pantothenate: step 4/5. Reversibly transfers an adenylyl group from ATP to 4'-phosphopantetheine, yielding dephospho-CoA (dPCoA) and pyrophosphate. In Chlorobium limicola (strain DSM 245 / NBRC 103803 / 6330), this protein is Phosphopantetheine adenylyltransferase.